Here is a 454-residue protein sequence, read N- to C-terminus: Guanine deaminase (454 aa).

Zn(2+) is bound by residues His82 and His84. Substrate is bound by residues 84-87 (HASQ), 213-214 (RF), 240-243 (HISE), and Asp330. Residues His240 and Asp330 each contribute to the Zn(2+) site. Ser453 bears the Phosphoserine mark.

It belongs to the metallo-dependent hydrolases superfamily. ATZ/TRZ family. Homodimer. Requires Zn(2+) as cofactor.

It carries out the reaction guanine + H2O + H(+) = xanthine + NH4(+). It functions in the pathway purine metabolism; guanine degradation; xanthine from guanine: step 1/1. Functionally, catalyzes the hydrolytic deamination of guanine, producing xanthine and ammonia. The sequence is that of Guanine deaminase (GDA) from Pongo abelii (Sumatran orangutan).